The primary structure comprises 113 residues: UPF0122 protein MGAS10270_Spy1030 (113 aa).

It belongs to the UPF0122 family.

Its function is as follows. Might take part in the signal recognition particle (SRP) pathway. This is inferred from the conservation of its genetic proximity to ftsY/ffh. May be a regulatory protein. The polypeptide is UPF0122 protein MGAS10270_Spy1030 (Streptococcus pyogenes serotype M2 (strain MGAS10270)).